Reading from the N-terminus, the 259-residue chain is MKEHKARKRFGQNFLQDTRIISDIVNAVRPQADDVVIEIGPGLAAITEPLAKKLNRLHVVEIDRDIVCRLKTLPFADKLVIHEGDVLQFDFNGIAGKKKIVGNLPYNISTPLLFKLAEVADDVVDMHFMLQKEVVERMVAAPKSNDYGRLGVMLQYFFDMEMLIDVPPESFDPAPKVDSAVVRMIPVKHRIGKADDFEHFAKLVKLAFHQRRKTIRNNLKELAGDDDLQAVGINPQDRAEHIAPEKYVALSNYLAGKAV.

Residues Asn13, Leu15, Gly40, Glu61, Asp85, and Asn103 each coordinate S-adenosyl-L-methionine.

The protein belongs to the class I-like SAM-binding methyltransferase superfamily. rRNA adenine N(6)-methyltransferase family. RsmA subfamily.

It localises to the cytoplasm. It carries out the reaction adenosine(1518)/adenosine(1519) in 16S rRNA + 4 S-adenosyl-L-methionine = N(6)-dimethyladenosine(1518)/N(6)-dimethyladenosine(1519) in 16S rRNA + 4 S-adenosyl-L-homocysteine + 4 H(+). Functionally, specifically dimethylates two adjacent adenosines (A1518 and A1519) in the loop of a conserved hairpin near the 3'-end of 16S rRNA in the 30S particle. May play a critical role in biogenesis of 30S subunits. This chain is Ribosomal RNA small subunit methyltransferase A, found in Neisseria meningitidis serogroup C / serotype 2a (strain ATCC 700532 / DSM 15464 / FAM18).